The chain runs to 270 residues: tRNA pseudouridine synthase A (270 aa).

Catalysis depends on aspartate 51, which acts as the Nucleophile. Tyrosine 109 serves as a coordination point for substrate.

It belongs to the tRNA pseudouridine synthase TruA family. In terms of assembly, homodimer.

The catalysed reaction is uridine(38/39/40) in tRNA = pseudouridine(38/39/40) in tRNA. Its function is as follows. Formation of pseudouridine at positions 38, 39 and 40 in the anticodon stem and loop of transfer RNAs. The chain is tRNA pseudouridine synthase A from Variovorax paradoxus (strain S110).